The following is a 315-amino-acid chain: Fucose-specific lectin (315 aa).

A run of 6 repeats spans residues S2–I53, G54–K103, F104–A155, L156–D207, R208–V260, and I261–A315. The interval S2–A315 is 6 X approximate tandem repeats. Alpha-L-fucose contacts are provided by R25, E37, W44, R73, E85, W94, G98, R126, E138, W146, T150, R177, Q189, W198, R230, and Q242. Zn(2+) contacts are provided by C244, D246, and H252. Positions 282 and 296 each coordinate alpha-L-fucose.

Belongs to the fungal fucose-specific lectin family. Homodimer.

Its function is as follows. Multispecific lectin that is able to recognize L-fucose in all possible linkages. These could be found not only in decomposed plant matter in soil, which is the natural environment for A.fumigatus, but also in various epitopes on human tissues. Mediates binding of A.fumigatus conidia to airway mucin in a fucose dependent manner. Stimulates IL-8 production by human bronchial cells in a dose-dependent manner, contributing to the inflammatory response observed upon the exposure of a patient to A.fumigatus, and thus might be an important virulence factor involved in an early stage of A.fumigatus infection. This chain is Fucose-specific lectin, found in Aspergillus fumigatus (strain ATCC MYA-4609 / CBS 101355 / FGSC A1100 / Af293) (Neosartorya fumigata).